The chain runs to 283 residues: ATP synthase gamma chain (283 aa).

Belongs to the ATPase gamma chain family. As to quaternary structure, F-type ATPases have 2 components, CF(1) - the catalytic core - and CF(0) - the membrane proton channel. CF(1) has five subunits: alpha(3), beta(3), gamma(1), delta(1), epsilon(1). CF(0) has three main subunits: a, b and c.

It is found in the cell inner membrane. Produces ATP from ADP in the presence of a proton gradient across the membrane. The gamma chain is believed to be important in regulating ATPase activity and the flow of protons through the CF(0) complex. The polypeptide is ATP synthase gamma chain (Ehrlichia ruminantium (strain Gardel)).